A 274-amino-acid polypeptide reads, in one-letter code: Ubiquinone biosynthesis protein COQ4 homolog, mitochondrial (274 aa).

A mitochondrion-targeting transit peptide spans 1-20 (MLRQTAFRSMKLNRTPGRYF). Residues 13-40 (NRTPGRYFTTAENMDTGSSQSPPDTEQK) are disordered. Polar residues predominate over residues 22–36 (TAENMDTGSSQSPPD). His177, Asp178, His181, and Glu193 together coordinate Zn(2+).

The protein belongs to the COQ4 family. Component of a multi-subunit COQ enzyme complex. It depends on Zn(2+) as a cofactor.

Its subcellular location is the mitochondrion inner membrane. The enzyme catalyses a 4-hydroxy-3-methoxy-5-(all-trans-polyprenyl)benzoate + H(+) = a 2-methoxy-6-(all-trans-polyprenyl)phenol + CO2. The protein operates within cofactor biosynthesis; ubiquinone biosynthesis. Lyase that catalyzes the C1-decarboxylation of 4-hydroxy-3-methoxy-5-(all-trans-polyprenyl)benzoic acid into 2-methoxy-6-(all-trans-polyprenyl)phenol during ubiquinone biosynthesis. This Aedes aegypti (Yellowfever mosquito) protein is Ubiquinone biosynthesis protein COQ4 homolog, mitochondrial.